The primary structure comprises 243 residues: Membrane selenoprotein (243 aa).

The disordered stretch occupies residues 12–63 (GEDCEGGVUARPSSSSSSINNASDESTPLISKTNDEEKANIGISSTSNSPQE). Sec-20 is a non-standard amino acid (selenocysteine). Polar residues-rich tracts occupy residues 30-43 (INNA…LISK) and 53-63 (GISSTSNSPQE). Helical transmembrane passes span 74–94 (ILTL…PVLI), 102–122 (VSAG…LSIL), 144–164 (IKFG…FDIL), and 199–219 (VMGW…LLVG). A non-standard amino acid (selenocysteine) is located at residue Sec-88.

It localises to the membrane. This is Membrane selenoprotein (msp) from Dictyostelium discoideum (Social amoeba).